We begin with the raw amino-acid sequence, 282 residues long: Elongation factor Ts (282 aa).

Positions 80–83 are involved in Mg(2+) ion dislocation from EF-Tu; the sequence is TDFV.

It belongs to the EF-Ts family.

Its subcellular location is the cytoplasm. In terms of biological role, associates with the EF-Tu.GDP complex and induces the exchange of GDP to GTP. It remains bound to the aminoacyl-tRNA.EF-Tu.GTP complex up to the GTP hydrolysis stage on the ribosome. This chain is Elongation factor Ts, found in Aliivibrio salmonicida (strain LFI1238) (Vibrio salmonicida (strain LFI1238)).